The primary structure comprises 367 residues: tRNA (cytosine(34)-C(5))-methyltransferase, mitochondrial (367 aa).

S-adenosyl-L-methionine-binding positions include 170-176 (CAAPGGK), glutamate 193, aspartate 224, and aspartate 242. Residue cysteine 296 is the Nucleophile of the active site.

It belongs to the class I-like SAM-binding methyltransferase superfamily. RsmB/NOP family.

It localises to the mitochondrion matrix. The catalysed reaction is cytidine(34) in mitochondrial tRNA + S-adenosyl-L-methionine = 5-methylcytidine(34) in mitochondrial tRNA + S-adenosyl-L-homocysteine + H(+). Its function is as follows. Mitochondrial tRNA methyltransferase that mediates methylation of cytosine to 5-methylcytosine (m5C) at position 34 of mt-tRNA(Met). mt-tRNA(Met) methylation at cytosine(34) takes place at the wobble position of the anticodon and initiates the formation of 5-formylcytosine (f(5)c) at this position. mt-tRNA(Met) containing the f(5)c modification at the wobble position enables recognition of the AUA codon in addition to the AUG codon, expanding codon recognition in mitochondrial translation. This chain is tRNA (cytosine(34)-C(5))-methyltransferase, mitochondrial, found in Danio rerio (Zebrafish).